Here is a 332-residue protein sequence, read N- to C-terminus: Transcription regulatory protein SNF6 (332 aa).

Positions 2-8 match the Nuclear localization signal motif; the sequence is GVIKKKR. T165 carries the post-translational modification Phosphothreonine. A disordered region spans residues 278 to 299; the sequence is VTTVASQSPHATATEKEPVPAV.

Component of the SWI/SNF global transcription activator complex. The 1.14 MDa SWI/SNF complex is composed of 11 different subunits: one copy each of SWI1, SNF2/SWI2, SNF5, SNF12/SWP73, ARP7/SWP61, ARP9/SWP59; two copies each of SWI3, SNF6, SNF11, SWP82; and three copies of TAF14/SWP29.

The protein localises to the nucleus. Functionally, involved in transcriptional activation. Component of the SWI/SNF complex, an ATP-dependent chromatin remodeling complex, which is required for the positive and negative regulation of gene expression of a large number of genes. It changes chromatin structure by altering DNA-histone contacts within a nucleosome, leading eventually to a change in nucleosome position, thus facilitating or repressing binding of gene-specific transcription factors. This Saccharomyces cerevisiae (strain ATCC 204508 / S288c) (Baker's yeast) protein is Transcription regulatory protein SNF6 (SNF6).